A 1029-amino-acid polypeptide reads, in one-letter code: Protein SUPPRESSOR OF PHYA-105 1 (1029 aa).

Positions 42–69 (SETANSDCPGSSAHRNVDLTKPPPPEEA) are disordered. The region spanning 188–529 (VQMKTPVSSS…ARDILKSELI (342 aa)) is the Protein kinase domain. Residues 194-202 (VSSSNFSQL) and Lys216 each bind ATP. The segment at 213–269 (VVGKNQETPPEFVSDQDLGSKEKKLDISKSPTPHDVLPLKSSPKGNGMVSHGDGNHS) is disordered. The segment covering 230 to 239 (LGSKEKKLDI) has biased composition (basic and acidic residues). Residue Asp316 is the Proton acceptor of the active site. Positions 347–392 (EDLNRRRPVVEESSSGGRDSKKRKMDLHLNSPGNQLQATSTGRPFK) are disordered. A compositionally biased stretch (polar residues) spans 377-388 (SPGNQLQATSTG). A coiled-coil region spans residues 557 to 589 (VQKKKKASKLLQDIQTLEDDIKEAERRYSSNVS). The interval 653–679 (ARSDKTLKDRDRCSENQNENQDMSTKG) is disordered. A compositionally biased stretch (basic and acidic residues) spans 654-666 (RSDKTLKDRDRCS). A compositionally biased stretch (polar residues) spans 667–679 (ENQNENQDMSTKG). WD repeat units lie at residues 714 to 753 (NSAS…NESV), 763 to 803 (VNKS…GFSQ), 806 to 846 (EHQK…SLGT), 848 to 888 (WSPA…TPWC), 892 to 930 (GHEK…SSGL), 932 to 971 (PGAC…YSYY), and 997 to 1029 (DNGQ…LKLV). Residues 866–881 (LAFGSADYKVYCYDLR) carry the DWD box motif.

Interacts with CO, COP1, HFR1, HY5 and PHYA. Light induces dissociation of the SPA1/COP1 complex. Binds to CRY1 in response to blue light, this interaction prevents SPA1/COP1 complex formation but stimulate CRY2/COP1 complex, and thus avoid COP1-dependent degradation of the transcription factor HY5 by the proteasome and promotes hypocotyl elongation.

It localises to the nucleus speckle. The protein localises to the nucleus. Its subcellular location is the PML body. Controls normal photoperiodic flowering and regulates circadian rhythms. Required for suppression of photomorphogenesis in dark-grown seedlings and for normal elongation growth of adult plants. Integral component of the COP1/SPA E3 ubiquitin-protein ligase complex. Involved in HY5, HFR1, LAF1 and CO degradation. The chain is Protein SUPPRESSOR OF PHYA-105 1 (SPA1) from Arabidopsis thaliana (Mouse-ear cress).